Consider the following 181-residue polypeptide: Early upstream open reading frame (181 aa).

This sequence belongs to the EUO family.

The chain is Early upstream open reading frame from Chlamydia caviae (strain ATCC VR-813 / DSM 19441 / 03DC25 / GPIC) (Chlamydophila caviae).